We begin with the raw amino-acid sequence, 241 residues long: Exosome complex component RRP41 homolog (241 aa).

Met1 is modified (N-acetylmethionine).

This sequence belongs to the RNase PH family. Component of the RNA exosome complex. Interacts with RPP4.

The protein resides in the cytoplasm. It localises to the nucleus. It is found in the nucleolus. In terms of biological role, non-catalytic component of the RNA exosome complex which has 3'-&gt;5' exoribonuclease activity and participates in a multitude of cellular RNA processing, maturation and degradation events. In vitro, is a processive phosphorolytic exonuclease and requires a single-stranded poly(A) tail on the substrate RNA for its activity. Can complement the growth defect of a yeast mutant lacking RRP41 exonuclease. Required for normal development of female gametophytes. This Arabidopsis thaliana (Mouse-ear cress) protein is Exosome complex component RRP41 homolog.